A 150-amino-acid polypeptide reads, in one-letter code: Endoribonuclease YbeY (150 aa).

The Zn(2+) site is built by H113, H117, and H123.

Belongs to the endoribonuclease YbeY family. Requires Zn(2+) as cofactor.

The protein localises to the cytoplasm. Its function is as follows. Single strand-specific metallo-endoribonuclease involved in late-stage 70S ribosome quality control and in maturation of the 3' terminus of the 16S rRNA. This Syntrophotalea carbinolica (strain DSM 2380 / NBRC 103641 / GraBd1) (Pelobacter carbinolicus) protein is Endoribonuclease YbeY.